Reading from the N-terminus, the 297-residue chain is Adrenocorticotropic hormone receptor (297 aa).

The Extracellular segment spans residues Met1 to Asp23. 2 N-linked (GlcNAc...) asparagine glycosylation sites follow: Asn12 and Asn17. Cystine bridges form between Cys21/Cys253 and Cys245/Cys251. Residues Val24–Val49 traverse the membrane as a helical segment. Topologically, residues Val50–Pro58 are cytoplasmic. The chain crosses the membrane as a helical span at residues Met59–Leu79. Residues Glu80–Asp104 are Extracellular-facing. A helical transmembrane segment spans residues Ile105–Ala126. Topologically, residues Asp127–Thr147 are cytoplasmic. A helical transmembrane segment spans residues Ile148–Phe168. Over Ser169–Ser180 the chain is Extracellular. A helical transmembrane segment spans residues Leu181–Leu199. Residues Ala200–Gly217 lie on the Cytoplasmic side of the membrane. Residues Ala218–Phe244 form a helical membrane-spanning segment. Residues Cys245 to Ser256 are Extracellular-facing. A helical transmembrane segment spans residues Leu257–Phe278. At Arg279–Gln297 the chain is on the cytoplasmic side. Cys293 carries the S-palmitoyl cysteine lipid modification.

This sequence belongs to the G-protein coupled receptor 1 family. Homodimer. Interacts with corticotropin (ACTH). Interacts with MRAP; this interaction targets MC2R to the plasma membrane. Interacts with MRAP2; competing with MRAP for binding to MC2R and impairing the binding of corticotropin (ACTH). Post-translationally, ubiquitinated by MGRN1 that may be involved in post-endocytic trafficking and/or degradation of internalized receptor.

The protein resides in the cell membrane. Functionally, hormone receptor primarily expressed in adrenal cortex that plays a key role in regulating adrenocortical function. Upon corticotropin (ACTH) binding, facilitates the release of adrenal glucocorticoids, including cortisol and corticosterone. In addition, MC2R is required for fetal and neonatal adrenal gland development. Mechanistically, activates adenylate cyclase (cAMP), the MAPK cascade as well as the cAMP-dependent protein kinase A pathway leading to steroidogenic factor 1/NR5A1-mediated transcriptional activation. The sequence is that of Adrenocorticotropic hormone receptor (MC2R) from Mesocricetus auratus (Golden hamster).